A 410-amino-acid polypeptide reads, in one-letter code: Multifunctional CCA protein (410 aa).

ATP is bound by residues glycine 8 and arginine 11. Residues glycine 8 and arginine 11 each coordinate CTP. 2 residues coordinate Mg(2+): aspartate 21 and aspartate 23. ATP contacts are provided by arginine 91, arginine 137, and arginine 140. Residues arginine 91, arginine 137, and arginine 140 each coordinate CTP. Residues 225–326 enclose the HD domain; it reads SGIHTLMTLQ…LNVLKKTDAF (102 aa).

It belongs to the tRNA nucleotidyltransferase/poly(A) polymerase family. Bacterial CCA-adding enzyme type 1 subfamily. In terms of assembly, monomer. Can also form homodimers and oligomers. Mg(2+) serves as cofactor. It depends on Ni(2+) as a cofactor.

It catalyses the reaction a tRNA precursor + 2 CTP + ATP = a tRNA with a 3' CCA end + 3 diphosphate. The catalysed reaction is a tRNA with a 3' CCA end + 2 CTP + ATP = a tRNA with a 3' CCACCA end + 3 diphosphate. Catalyzes the addition and repair of the essential 3'-terminal CCA sequence in tRNAs without using a nucleic acid template. Adds these three nucleotides in the order of C, C, and A to the tRNA nucleotide-73, using CTP and ATP as substrates and producing inorganic pyrophosphate. tRNA 3'-terminal CCA addition is required both for tRNA processing and repair. Also involved in tRNA surveillance by mediating tandem CCA addition to generate a CCACCA at the 3' terminus of unstable tRNAs. While stable tRNAs receive only 3'-terminal CCA, unstable tRNAs are marked with CCACCA and rapidly degraded. The polypeptide is Multifunctional CCA protein (Neisseria gonorrhoeae (strain NCCP11945)).